The primary structure comprises 233 residues: Orotidine 5'-phosphate decarboxylase (233 aa).

Residues Asp-13, Lys-35, 62 to 71 (DLKFHDIPNT), Thr-122, Arg-182, Gln-191, Gly-211, and Arg-212 each bind substrate. Lys-64 serves as the catalytic Proton donor.

It belongs to the OMP decarboxylase family. Type 1 subfamily. Homodimer.

It catalyses the reaction orotidine 5'-phosphate + H(+) = UMP + CO2. It participates in pyrimidine metabolism; UMP biosynthesis via de novo pathway; UMP from orotate: step 2/2. Its function is as follows. Catalyzes the decarboxylation of orotidine 5'-monophosphate (OMP) to uridine 5'-monophosphate (UMP). The sequence is that of Orotidine 5'-phosphate decarboxylase from Pseudomonas entomophila (strain L48).